We begin with the raw amino-acid sequence, 88 residues long: Putative membrane protein insertion efficiency factor (88 aa).

This sequence belongs to the UPF0161 family.

It localises to the cell membrane. In terms of biological role, could be involved in insertion of integral membrane proteins into the membrane. This chain is Putative membrane protein insertion efficiency factor (yrcB), found in Lactococcus lactis subsp. lactis (strain IL1403) (Streptococcus lactis).